A 348-amino-acid chain; its full sequence is MNPYVLMILMSSLGLGTTLTFSSSHWILAWMGLEINTLAIVPLMAQQHHPRAVEATTKYFLIQAAAAAMILFTSTTNAWISGQWDVTGMPGPATSTAMMFALALKIGLAPMHFWLPEVLQGLDLLTGLILSTWQKLAPMALIIQTTQTTDPLILTSLGIASSLIGGWSGLNQTQLRKILAYSSIAHMGWMIIVIQYAPQLTLIALGTYIFMTSAAFLTLKVLSATKINTLTTTWPKSPILAAIATLVMLSLGGLPPLTGFMPKWLILQELTKQDLPATATIMALTALLSLFFYLRLCHAMTLTTSPNTINSAPHWRVQTTQNSLPLTISVTVTMGLLPLTPAILMLTT.

Helical transmembrane passes span 1 to 21, 25 to 45, 60 to 80, 99 to 119, 124 to 144, 151 to 171, 178 to 197, 202 to 224, 239 to 259, 274 to 294, and 326 to 346; these read MNPY…TLTF, HWIL…PLMA, FLIQ…NAWI, MFAL…PEVL, LLTG…LIIQ, PLIL…SGLN, ILAY…IQYA, LIAL…VLSA, ILAA…PLTG, DLPA…FFYL, and LTIS…ILML.

It belongs to the complex I subunit 2 family. As to quaternary structure, core subunit of respiratory chain NADH dehydrogenase (Complex I) which is composed of 45 different subunits.

The protein resides in the mitochondrion inner membrane. It catalyses the reaction a ubiquinone + NADH + 5 H(+)(in) = a ubiquinol + NAD(+) + 4 H(+)(out). Its function is as follows. Core subunit of the mitochondrial membrane respiratory chain NADH dehydrogenase (Complex I) which catalyzes electron transfer from NADH through the respiratory chain, using ubiquinone as an electron acceptor. Essential for the catalytic activity and assembly of complex I. This Danio rerio (Zebrafish) protein is NADH-ubiquinone oxidoreductase chain 2 (mt-nd2).